A 236-amino-acid chain; its full sequence is 2-C-methyl-D-erythritol 4-phosphate cytidylyltransferase (236 aa).

This sequence belongs to the IspD/TarI cytidylyltransferase family. IspD subfamily. Homodimer.

The catalysed reaction is 2-C-methyl-D-erythritol 4-phosphate + CTP + H(+) = 4-CDP-2-C-methyl-D-erythritol + diphosphate. It functions in the pathway isoprenoid biosynthesis; isopentenyl diphosphate biosynthesis via DXP pathway; isopentenyl diphosphate from 1-deoxy-D-xylulose 5-phosphate: step 2/6. Functionally, catalyzes the formation of 4-diphosphocytidyl-2-C-methyl-D-erythritol from CTP and 2-C-methyl-D-erythritol 4-phosphate (MEP). The protein is 2-C-methyl-D-erythritol 4-phosphate cytidylyltransferase of Salmonella arizonae (strain ATCC BAA-731 / CDC346-86 / RSK2980).